The following is a 302-amino-acid chain: 33 kDa chaperonin (302 aa).

Cystine bridges form between C240–C242 and C273–C276.

The protein belongs to the HSP33 family. Under oxidizing conditions two disulfide bonds are formed involving the reactive cysteines. Under reducing conditions zinc is bound to the reactive cysteines and the protein is inactive.

Its subcellular location is the cytoplasm. Its function is as follows. Redox regulated molecular chaperone. Protects both thermally unfolding and oxidatively damaged proteins from irreversible aggregation. Plays an important role in the bacterial defense system toward oxidative stress. This chain is 33 kDa chaperonin, found in Synechocystis sp. (strain ATCC 27184 / PCC 6803 / Kazusa).